The sequence spans 894 residues: Pentatricopeptide repeat-containing protein At1g19720 (894 aa).

PPR repeat units lie at residues 80–110, 114–144, 145–179, 180–214, 215–245, 246–280, 281–315, 316–350, 351–385, 386–416, 417–451, 452–486, 488–522, 523–557, 558–588, 589–623, 624–659, and 660–694; these read KRSTYLKLLESCIDSGSIHLGRILHARFGLF, DVFVETKLLSMYAKCGCIADARKVFDSMRER, NLFTWSAMIGAYSRENRWREVAKLFRLMMKDGVLP, DDFLFPKILQGCANCGDVEAGKVIHSVVIKLGMSS, CLRVSNSILAVYAKCGELDFATKFFRRMRER, DVIAWNSVLLAYCQNGKHEEAVELVKEMEKEGISP, GLVTWNILIGGYNQLGKCDAAMDLMQKMETFGITA, DVFTWTAMISGLIHNGMRYQALDMFRKMFLAGVVP, NAVTIMSAVSACSCLKVINQGSEVHSIAVKMGFID, DVLVGNSLVDMYSKCGKLEDARKVFDSVKNK, DVYTWNSMITGYCQAGYCGKAYELFTRMQDANLRP, NIITWNTMISGYIKNGDEGEAMDLFQRMEKDGKVQ, NTATWNLIIAGYIQNGKKDEALELFRKMQFSRFMP, NSVTILSLLPACANLLGAKMVREIHGCVLRRNLDA, IHAVKNALTDTYAKSGDIEYSRTIFLGMETK, DIITWNSLIGGYVLHGSYGPALALFNQMKTQGITP, NRGTLSSIILAHGLMGNVDEGKKVFYSIANDYHIIP, and ALEHCSAMVYLYGRANRLEEALQFIQEMNIQSETP. The segment at 695-770 is type E motif; that stretch reads IWESFLTGCR…PLGQSWIEVR (76 aa). A type E(+) motif region spans residues 771 to 801; sequence NLIHTFTTGDQSKLCTDVLYPLVEKMSRLDN. Residues 803–894 form a type DYW motif region; that stretch reads SDQYNGELWI…NGDCSCKDYW (92 aa).

It belongs to the PPR family. PCMP-H subfamily.

This is Pentatricopeptide repeat-containing protein At1g19720 (DYW7) from Arabidopsis thaliana (Mouse-ear cress).